The following is a 177-amino-acid chain: Large ribosomal subunit protein uL6 (177 aa).

Belongs to the universal ribosomal protein uL6 family. In terms of assembly, part of the 50S ribosomal subunit.

This protein binds to the 23S rRNA, and is important in its secondary structure. It is located near the subunit interface in the base of the L7/L12 stalk, and near the tRNA binding site of the peptidyltransferase center. This chain is Large ribosomal subunit protein uL6, found in Cereibacter sphaeroides (strain ATCC 17029 / ATH 2.4.9) (Rhodobacter sphaeroides).